Here is a 143-residue protein sequence, read N- to C-terminus: Zinc-containing ferredoxin (143 aa).

The segment at 13-60 (PIDEHFLENDKDYPVTGQHNGHDVRAEGMQRLDADGKPYPTKLGIHGT) is N-terminal extension. Zn(2+) contacts are provided by H31, H34, and H58. 4Fe-4S ferredoxin-type domains follow at residues 60–89 (THVAVDWDCCIADGACMDVCPVNLYEWNLN) and 115–143 (KCDPVRESDCIFCMACESVCPVRAIKITP). 2 residues coordinate [3Fe-4S] cluster: C69 and C75. A [4Fe-4S] cluster-binding site is contributed by C79. D117 serves as a coordination point for Zn(2+). Residues C124, C127, and C130 each coordinate [4Fe-4S] cluster. [3Fe-4S] cluster is bound at residue C134.

Requires [3Fe-4S] cluster as cofactor. The cofactor is [4Fe-4S] cluster. Zn(2+) is required as a cofactor.

Its function is as follows. Ferredoxins are iron-sulfur proteins that transfer electrons in a wide variety of metabolic reactions. In Thermoplasma acidophilum (strain ATCC 25905 / DSM 1728 / JCM 9062 / NBRC 15155 / AMRC-C165), this protein is Zinc-containing ferredoxin (zfx).